The following is a 68-amino-acid chain: DNA-directed RNA polymerase subunit omega (68 aa).

It belongs to the RNA polymerase subunit omega family. As to quaternary structure, the RNAP catalytic core consists of 2 alpha, 1 beta, 1 beta' and 1 omega subunit. When a sigma factor is associated with the core the holoenzyme is formed, which can initiate transcription.

The catalysed reaction is RNA(n) + a ribonucleoside 5'-triphosphate = RNA(n+1) + diphosphate. Promotes RNA polymerase assembly. Latches the N- and C-terminal regions of the beta' subunit thereby facilitating its interaction with the beta and alpha subunits. This is DNA-directed RNA polymerase subunit omega from Alkaliphilus metalliredigens (strain QYMF).